Consider the following 302-residue polypeptide: uncharacterized protein (302 aa).

Asn-32, Asn-39, and Asn-94 each carry an N-linked (GlcNAc...) asparagine glycan. The region spanning 80-115 is the ShKT domain; the sequence is CRDTDMNCAVWVATNTSDCENVELVNSHCPRTCQTC. Cystine bridges form between Cys-80/Cys-115, Cys-87/Cys-108, and Cys-98/Cys-112. A glycan (N-linked (GlcNAc...) asparagine) is linked at Asn-181.

This is an uncharacterized protein from Caenorhabditis elegans.